Here is a 215-residue protein sequence, read N- to C-terminus: Pyrrolidone-carboxylate peptidase (215 aa).

Residues Glu80, Cys143, and His167 contribute to the active site.

This sequence belongs to the peptidase C15 family. Homotetramer.

Its subcellular location is the cytoplasm. The catalysed reaction is Release of an N-terminal pyroglutamyl group from a polypeptide, the second amino acid generally not being Pro.. In terms of biological role, removes 5-oxoproline from various penultimate amino acid residues except L-proline. The sequence is that of Pyrrolidone-carboxylate peptidase from Bacillus cereus (strain ATCC 14579 / DSM 31 / CCUG 7414 / JCM 2152 / NBRC 15305 / NCIMB 9373 / NCTC 2599 / NRRL B-3711).